A 128-amino-acid chain; its full sequence is Large ribosomal subunit protein bL12 (128 aa).

It belongs to the bacterial ribosomal protein bL12 family. In terms of assembly, homodimer. Part of the ribosomal stalk of the 50S ribosomal subunit. Forms a multimeric L10(L12)X complex, where L10 forms an elongated spine to which 2 to 4 L12 dimers bind in a sequential fashion. Binds GTP-bound translation factors.

Functionally, forms part of the ribosomal stalk which helps the ribosome interact with GTP-bound translation factors. Is thus essential for accurate translation. The chain is Large ribosomal subunit protein bL12 from Corynebacterium glutamicum (strain R).